A 339-amino-acid polypeptide reads, in one-letter code: UDP-N-acetylenolpyruvoylglucosamine reductase (339 aa).

Residues 19-189 (VDVQARLFAE…LRVRFKLSRV (171 aa)) enclose the FAD-binding PCMH-type domain. Arg-166 is a catalytic residue. Ser-239 (proton donor) is an active-site residue. Residue Glu-335 is part of the active site.

It belongs to the MurB family. It depends on FAD as a cofactor.

It is found in the cytoplasm. It catalyses the reaction UDP-N-acetyl-alpha-D-muramate + NADP(+) = UDP-N-acetyl-3-O-(1-carboxyvinyl)-alpha-D-glucosamine + NADPH + H(+). It functions in the pathway cell wall biogenesis; peptidoglycan biosynthesis. Cell wall formation. In Pseudomonas syringae pv. syringae (strain B728a), this protein is UDP-N-acetylenolpyruvoylglucosamine reductase.